The sequence spans 128 residues: Elongation factor G (128 aa).

Belongs to the GTP-binding elongation factor family. EF-G/EF-2 subfamily.

The protein localises to the cytoplasm. Catalyzes the GTP-dependent ribosomal translocation step during translation elongation. During this step, the ribosome changes from the pre-translocational (PRE) to the post-translocational (POST) state as the newly formed A-site-bound peptidyl-tRNA and P-site-bound deacylated tRNA move to the P and E sites, respectively. Catalyzes the coordinated movement of the two tRNA molecules, the mRNA and conformational changes in the ribosome. The protein is Elongation factor G (fusA) of Planobispora rosea.